A 355-amino-acid chain; its full sequence is S-adenosylmethionine:tRNA ribosyltransferase-isomerase (355 aa).

The protein belongs to the QueA family. Monomer.

Its subcellular location is the cytoplasm. The catalysed reaction is 7-aminomethyl-7-carbaguanosine(34) in tRNA + S-adenosyl-L-methionine = epoxyqueuosine(34) in tRNA + adenine + L-methionine + 2 H(+). Its pathway is tRNA modification; tRNA-queuosine biosynthesis. Transfers and isomerizes the ribose moiety from AdoMet to the 7-aminomethyl group of 7-deazaguanine (preQ1-tRNA) to give epoxyqueuosine (oQ-tRNA). The protein is S-adenosylmethionine:tRNA ribosyltransferase-isomerase of Jannaschia sp. (strain CCS1).